The following is a 256-amino-acid chain: CD209 antigen-like protein 2 (256 aa).

Over 1–50 (MSDSKEPRAQPLGLLEEEELITSSMNFFPRDFGFRQTRGYKSLAGCLGHA) the chain is Cytoplasmic. The Endocytosis signal motif lies at 14–15 (LL). A helical; Signal-anchor for type II membrane protein membrane pass occupies residues 51-71 (PLVLPLLFFTLFTGLLVAILV). Topologically, residues 72–240 (QVSKNPSSQR…KSAASCSRDE (169 aa)) are extracellular. 3 cysteine pairs are disulfide-bonded: cysteine 108–cysteine 119, cysteine 136–cysteine 229, and cysteine 208–cysteine 221. In terms of domain architecture, C-type lectin spans 114 to 230 (FFQGNCYFIS…CSAAKFWICK (117 aa)). Ca(2+) contacts are provided by glutamate 199, asparagine 201, isoleucine 203, glutamate 206, asparagine 217, and aspartate 218.

As to expression, predominantly expressed in liver and axillary lymph nodes. At very low levels also found in other tissues.

The protein resides in the membrane. In terms of biological role, probable pathogen-recognition receptor involved in peripheral immune surveillance in liver. May mediate the endocytosis of pathogens which are subsequently degraded in lysosomal compartments. Probably recognizes in a calcium-dependent manner high mannose N-linked oligosaccharides in a variety of pathogen antigens. Is a receptor for ICAM3, probably by binding to mannose-like carbohydrates. The chain is CD209 antigen-like protein 2 (CD209L2) from Macaca mulatta (Rhesus macaque).